Here is a 305-residue protein sequence, read N- to C-terminus: Fe-S cluster assembly protein dre2 (305 aa).

The N-terminal SAM-like domain stretch occupies residues 21–150; the sequence is DATQKRTLLL…EKPQYQEAAV (130 aa). A linker region spans residues 151–195; the sequence is PLRFGLKKKNKVAPEPVKVESVGFVDNYDDDELIDEDDLLAEEDL. [2Fe-2S] cluster is bound by residues cysteine 205, cysteine 217, cysteine 220, and cysteine 222. A fe-S binding site A region spans residues 205-222; sequence CKPDIAKKRRRACKDCTC. [4Fe-4S] cluster-binding residues include cysteine 268, cysteine 271, cysteine 279, and cysteine 282. Short sequence motifs (cx2C motif) lie at residues 268–271 and 279–282; these read CNSC and CEGC. The tract at residues 268-282 is fe-S binding site B; it reads CNSCSLGDAFRCEGC.

This sequence belongs to the anamorsin family. Monomer. Interacts with tah18. Interacts with mia40. Requires [2Fe-2S] cluster as cofactor. It depends on [4Fe-4S] cluster as a cofactor.

It is found in the cytoplasm. The protein localises to the mitochondrion intermembrane space. Its function is as follows. Component of the cytosolic iron-sulfur (Fe-S) protein assembly (CIA) machinery required for the maturation of extramitochondrial Fe-S proteins. Part of an electron transfer chain functioning in an early step of cytosolic Fe-S biogenesis, facilitating the de novo assembly of a [4Fe-4S] cluster on the scaffold complex cfd1-nbp35. Electrons are transferred to dre2 from NADPH via the FAD- and FMN-containing protein tah18. Tah18-dre2 are also required for the assembly of the diferric tyrosyl radical cofactor of ribonucleotide reductase (RNR), probably by providing electrons for reduction during radical cofactor maturation in the catalytic small subunit rnr2. This is Fe-S cluster assembly protein dre2 from Talaromyces marneffei (strain ATCC 18224 / CBS 334.59 / QM 7333) (Penicillium marneffei).